The following is a 904-amino-acid chain: DNA polymerase I (904 aa).

Residues 186–279 (TPRQYPDFAA…DTLRLQPWDR (94 aa)) enclose the 5'-3' exonuclease domain. Residues 317–493 (RGGALAPGTV…LADALDAELA (177 aa)) enclose the 3'-5' exonuclease domain.

It belongs to the DNA polymerase type-A family. Single-chain monomer with multiple functions.

It carries out the reaction DNA(n) + a 2'-deoxyribonucleoside 5'-triphosphate = DNA(n+1) + diphosphate. Functionally, in addition to polymerase activity, this DNA polymerase exhibits 3'-5' and 5'-3' exonuclease activity. The protein is DNA polymerase I (polA) of Mycobacterium bovis (strain ATCC BAA-935 / AF2122/97).